Reading from the N-terminus, the 288-residue chain is MNNIIDGKALANEILADLKLEIQELTSQTNASPKLAIVLVGDNPASIIYVRHKIKNAHKVGIYTLLINLSATIHTNDLISKINELNLDNEISGIIVQLPLPSSIDKNKILSAISPSKDIDGFHPLNVGYLHSGISQGFIPCTALGCLAAIKKYEPNLTGKNVVIIGRSNIVGKPLSALLLKENCSVTICHSKTHNLRSITSKADIVVAAIGSPLKLTAEYFNPESIVIDVGINRISSNKIIGDVDFENVQSKVQYITPVPGGIGPMTIAFLLKNTVKAFKDSLYTLDT.

NADP(+) contacts are provided by residues 166 to 168 (GRS), Ser191, and Ile232.

This sequence belongs to the tetrahydrofolate dehydrogenase/cyclohydrolase family. As to quaternary structure, homodimer.

The catalysed reaction is (6R)-5,10-methylene-5,6,7,8-tetrahydrofolate + NADP(+) = (6R)-5,10-methenyltetrahydrofolate + NADPH. It carries out the reaction (6R)-5,10-methenyltetrahydrofolate + H2O = (6R)-10-formyltetrahydrofolate + H(+). It functions in the pathway one-carbon metabolism; tetrahydrofolate interconversion. Functionally, catalyzes the oxidation of 5,10-methylenetetrahydrofolate to 5,10-methenyltetrahydrofolate and then the hydrolysis of 5,10-methenyltetrahydrofolate to 10-formyltetrahydrofolate. This chain is Bifunctional protein FolD, found in Rickettsia rickettsii (strain Iowa).